The sequence spans 282 residues: Ubiquinone biosynthesis protein COQ4 homolog, mitochondrial (282 aa).

The transit peptide at 1–30 directs the protein to the mitochondrion; that stretch reads MFVRKSCYSLINATRRCLRYRQLSSTTAGT. Residues His-186, Asp-187, His-190, and Glu-202 each contribute to the Zn(2+) site.

It belongs to the COQ4 family. In terms of assembly, component of a multi-subunit COQ enzyme complex. It depends on Zn(2+) as a cofactor.

Its subcellular location is the mitochondrion inner membrane. The catalysed reaction is a 4-hydroxy-3-methoxy-5-(all-trans-polyprenyl)benzoate + H(+) = a 2-methoxy-6-(all-trans-polyprenyl)phenol + CO2. It participates in cofactor biosynthesis; ubiquinone biosynthesis. Its function is as follows. Lyase that catalyzes the C1-decarboxylation of 4-hydroxy-3-methoxy-5-(all-trans-polyprenyl)benzoic acid into 2-methoxy-6-(all-trans-polyprenyl)phenol during ubiquinone biosynthesis. The sequence is that of Ubiquinone biosynthesis protein COQ4 homolog, mitochondrial from Anopheles gambiae (African malaria mosquito).